Consider the following 177-residue polypeptide: Inorganic pyrophosphatase (177 aa).

Residues Lys34, Arg48, and Tyr60 each coordinate substrate. Mg(2+) is bound by residues Asp70, Asp75, and Asp107. Tyr144 lines the substrate pocket.

This sequence belongs to the PPase family. As to quaternary structure, homohexamer. Mg(2+) serves as cofactor.

Its subcellular location is the cytoplasm. The enzyme catalyses diphosphate + H2O = 2 phosphate + H(+). Catalyzes the hydrolysis of inorganic pyrophosphate (PPi) forming two phosphate ions. In Picrophilus torridus (strain ATCC 700027 / DSM 9790 / JCM 10055 / NBRC 100828 / KAW 2/3), this protein is Inorganic pyrophosphatase.